A 187-amino-acid polypeptide reads, in one-letter code: UPF0340 protein SPG_0604 (187 aa).

This sequence belongs to the UPF0340 family.

In Streptococcus pneumoniae serotype 19F (strain G54), this protein is UPF0340 protein SPG_0604.